A 150-amino-acid chain; its full sequence is Guanine nucleotide-binding protein subunit gamma 2 (150 aa).

The segment covering 1–11 (MRGEANGEEEQ) has biased composition (acidic residues). Positions 1–59 (MRGEANGEEEQQPPRRNHLRDDAEEEEEVERRAARPVSGQQQQQQRRRPTDVGGGAAMR) are disordered. Residues 65–97 (GKHRLSAAIARLDQELQSLQDELNELETMEPAS) are a coiled coil. One can recognise a G protein gamma domain in the interval 71–137 (AAIARLDQEL…RWFQRVRSSR (67 aa)).

As to quaternary structure, g proteins are composed of 3 units, alpha, beta and gamma. Interacts with the beta subunit RGB1.

Its subcellular location is the cell membrane. In terms of biological role, guanine nucleotide-binding proteins (G proteins) are involved as modulators or transducers in various transmembrane signaling systems. The sequence is that of Guanine nucleotide-binding protein subunit gamma 2 from Oryza sativa subsp. indica (Rice).